The sequence spans 97 residues: Protein RESPONSE TO LOW SULFUR 3 (97 aa).

Residues 8–42 (VTVAAEEVEELRRRNGELEREMEEMKKEMVQLWRR) adopt a coiled-coil conformation.

This Arabidopsis thaliana (Mouse-ear cress) protein is Protein RESPONSE TO LOW SULFUR 3.